The primary structure comprises 116 residues: Large ribosomal subunit protein bL17 (116 aa).

Belongs to the bacterial ribosomal protein bL17 family. In terms of assembly, part of the 50S ribosomal subunit. Contacts protein L32.

This Helicobacter hepaticus (strain ATCC 51449 / 3B1) protein is Large ribosomal subunit protein bL17.